The following is a 420-amino-acid chain: Reticulon-4 receptor-like 2 (420 aa).

The N-terminal stretch at 1–30 (MLPGLRRLLQGPASACLLLTLLALPSVTPS) is a signal peptide. 2 disulfides stabilise this stretch: Cys31–Cys37 and Cys35–Cys46. Residues 31–60 (CPMLCTCYSSPPTVSCQANNFSSVPLSLPP) enclose the LRRNT domain. The N-linked (GlcNAc...) asparagine glycan is linked to Asn50. 8 LRR repeats span residues 61–82 (STQR…TFGP), 83–104 (NLLT…TFRH), 107–129 (ALEE…TFQG), 132–153 (RLQS…IFRG), 156–177 (SLQY…LFAD), 180–201 (NLSH…VFRG), 204–225 (SLDR…AFHG), and 228–249 (RLTI…ALAD). Asn93 carries an N-linked (GlcNAc...) asparagine glycan. N-linked (GlcNAc...) asparagine glycosylation occurs at Asn236. Positions 261-312 (NPWACDCRARPLWAWFQRARVSSSDVTCATPPERQGRDLRALRDSDFQACPP) constitute an LRRCT domain. 2 disulfide bridges follow: Cys265-Cys288 and Cys267-Cys310. Positions 286–399 (VTCATPPERQ…CQAPADSRGP (114 aa)) are disordered. Residues 294 to 306 (RQGRDLRALRDSD) show a composition bias toward basic and acidic residues. Residues 315-327 (PTRPGSRARGNSS) are important for interaction with MAG. Basic and acidic residues predominate over residues 351–360 (LPAEDSRGRQ). A lipid anchor (GPI-anchor amidated glycine) is attached at Gly398. Residues 399–420 (PALSAGLRTPLLCLLPLALHHL) constitute a propeptide, removed in mature form.

This sequence belongs to the Nogo receptor family. As to quaternary structure, interaction with MAG is controversial, and may be indirect. Interacts with MAG. Does not interact with OMG and RTN4. Post-translationally, undergoes zinc metalloproteinase-mediated ectodomain shedding in neuroblastoma cells; is released both as a full-length ectodomain and an N-terminal fragment containing the leucine-rich repeat (LRR) region of the protein. In terms of processing, N-glycosylated. In terms of tissue distribution, detected in brain. Detected in hippocampus neurons (at protein level).

The protein localises to the cell membrane. It is found in the membrane raft. It localises to the cell projection. Its subcellular location is the dendrite. The protein resides in the axon. The protein localises to the perikaryon. Functionally, cell surface receptor that plays a functionally redundant role in the inhibition of neurite outgrowth mediated by MAG. Plays a functionally redundant role in postnatal brain development. Contributes to normal axon migration across the brain midline and normal formation of the corpus callosum. Does not seem to play a significant role in regulating axon regeneration in the adult central nervous system. Protects motoneurons against apoptosis; protection against apoptosis is probably mediated by MAG. Like other family members, plays a role in restricting the number dendritic spines and the number of synapses that are formed during brain development. Signaling mediates activation of Rho and downstream reorganization of the actin cytoskeleton. This chain is Reticulon-4 receptor-like 2, found in Mus musculus (Mouse).